Consider the following 76-residue polypeptide: Frizzled-3 (76 aa).

Over 1–5 (YPERP) the chain is Cytoplasmic. The helical transmembrane segment at 6 to 26 (IIFYAVCYMMVSLIFFIGFLL) threads the bilayer. Topologically, residues 27 to 54 (EDRVACNASSPAQYKASTVTQGSHNKAC) are extracellular. N-linked (GlcNAc...) asparagine glycosylation occurs at Asn-33. The chain crosses the membrane as a helical span at residues 55–75 (TMLFMVLYFFTMAGSVWWVIL). Position 76 (Arg-76) is a topological domain, cytoplasmic.

Belongs to the G-protein coupled receptor Fz/Smo family.

It localises to the membrane. Its subcellular location is the cell membrane. The protein localises to the cell surface. It is found in the apical cell membrane. Receptor for Wnt proteins. Most of frizzled receptors are coupled to the beta-catenin canonical signaling pathway, which leads to the activation of disheveled proteins, inhibition of GSK-3 kinase, nuclear accumulation of beta-catenin and activation of Wnt target genes. A second signaling pathway involving PKC and calcium fluxes has been seen for some family members, but it is not yet clear if it represents a distinct pathway or if it can be integrated in the canonical pathway, as PKC seems to be required for Wnt-mediated inactivation of GSK-3 kinase. Both pathways seem to involve interactions with G-proteins. May be involved in transduction and intercellular transmission of polarity information during tissue morphogenesis and/or in differentiated tissues. Plays a role in controlling early axon growth and guidance processes necessary for the formation of a subset of central and peripheral major fiber tracts. Involved in the migration of cranial neural crest cells. May also be implicated in the transmission of sensory information from the trunk and limbs to the brain. Controls commissural sensory axons guidance after midline crossing along the anterior-posterior axis in the developing spinal cord in a Wnt-dependent signaling pathway. Together with FZD6, is involved in the neural tube closure and plays a role in the regulation of the establishment of planar cell polarity (PCP). Promotes neurogenesis by maintaining sympathetic neuroblasts within the cell cycle in a beta-catenin-dependent manner. In Gallus gallus (Chicken), this protein is Frizzled-3 (FZD3).